The primary structure comprises 128 residues: Sulfurtransferase TusD (128 aa).

The active-site Cysteine persulfide intermediate is Cys78.

The protein belongs to the DsrE/TusD family. As to quaternary structure, heterohexamer, formed by a dimer of trimers. The hexameric TusBCD complex contains 2 copies each of TusB, TusC and TusD. The TusBCD complex interacts with TusE.

The protein localises to the cytoplasm. Functionally, part of a sulfur-relay system required for 2-thiolation of 5-methylaminomethyl-2-thiouridine (mnm(5)s(2)U) at tRNA wobble positions. Accepts sulfur from TusA and transfers it in turn to TusE. The sequence is that of Sulfurtransferase TusD from Salmonella newport (strain SL254).